Reading from the N-terminus, the 89-residue chain is Dynein light chain 1, cytoplasmic (89 aa).

Residue K36 is modified to N6-acetyllysine. A Glycyl lysine isopeptide (Lys-Gly) (interchain with G-Cter in SUMO2) cross-link involves residue K43. Residues 67–89 (THETKHFIYFYLGQVAILLFKSG) form an interaction with ESR1 region. S88 bears the Phosphoserine mark.

The protein belongs to the dynein light chain family. As to quaternary structure, homodimer. Monomer; the monomeric form is incapable of binding to target proteins. The cytoplasmic dynein 1 complex consists of two catalytic heavy chains (HCs) and a number of non-catalytic subunits presented by intermediate chains (ICs), light intermediate chains (LICs) and light chains (LCs); the composition seems to vary in respect to the IC, LIC and LC composition. The heavy chain homodimer serves as a scaffold for the probable homodimeric assembly of the respective non-catalytic subunits. The ICs and LICs bind directly to the HC dimer and the LCs assemble on the IC dimer. Interacts with TXNDC17. Interacts with WWC1 and ESR1. The WWC1-DYNLL1 interaction is mandatory for the recruitment and transactivation functions of ESR1 or DYNLL1 to the target chromatin. Interacts with BCL2L11. Interacts with BCL2; the interaction is greatly enhanced in the nucleus and in mitochondria upon induction of apoptosis. Interacts with PAK1; the interaction requires dimeric DYNLL1. Interacts with MYZAP. Part of an astrin (SPAG5)-kinastrin (SKAP) complex containing KNSTRN, SPAG5, PLK1, DYNLL1 and SGO2. Interacts with ATMIN; this interaction inhibits ATMIN transcriptional activity and hence may play a role in a feedback loop whereby DYNLL1 inhibits transactivation of its own promoter by ATMIN. Interacts with NEK9 (not phosphorylated at 'Ser-944'). Interacts with BICD2. Interacts with BCAS1. Interacts with Basson/BSN. Interacts with HDAC6. Interacts with TPPP. Interacts with AMBRA1 (via TQT motifs); tethering AMBRA1 to the cytoskeleton. Interacts with FAM83D/CHICA (via C-terminus). Interacts with HMMR, SPAG5/Astrin and KNSTRN/Kinastrin. Interacts with TLK2. Interacts with NOS1. Interacts with WWC1, WWC2 and WWC3. Interacts with MRE11; inhibiting MRE11 homodimerization and activity. In terms of assembly, (Microbial infection) Interacts with bovine immunodeficiency virus Gag protein; this interaction is critical for intracellular microtubule-dependent viral genome transport. Phosphorylation at Ser-88 promotes recruitment to DNA double-strand breaks (DSBs) by TP53BP1 and ability to inhibit MRE11.

It is found in the cytoplasm. The protein resides in the cytoskeleton. It localises to the microtubule organizing center. Its subcellular location is the centrosome. The protein localises to the chromosome. It is found in the nucleus. The protein resides in the mitochondrion. Acts as one of several non-catalytic accessory components of the cytoplasmic dynein 1 complex that are thought to be involved in linking dynein to cargos and to adapter proteins that regulate dynein function. Cytoplasmic dynein 1 acts as a motor for the intracellular retrograde motility of vesicles and organelles along microtubules. May play a role in changing or maintaining the spatial distribution of cytoskeletal structures. In addition to its role in cytoskeleton and transport, acts as a protein-protein adapter, which inhibits and/or sequesters target proteins. Involved in the response to DNA damage by acting as a key regulator of DNA end resection: when phosphorylated at Ser-88, recruited to DNA double-strand breaks (DSBs) by TP53BP1 and acts by disrupting MRE11 dimerization, thereby inhibiting DNA end resection. In a subset of DSBs, DYNLL1 remains unphosphorylated and promotes the recruitment of the Shieldin complex. Binds and inhibits the catalytic activity of neuronal nitric oxide synthase/NOS1. Promotes transactivation functions of ESR1 and plays a role in the nuclear localization of ESR1. Regulates apoptotic activities of BCL2L11 by sequestering it to microtubules. Upon apoptotic stimuli the BCL2L11-DYNLL1 complex dissociates from cytoplasmic dynein and translocates to mitochondria and sequesters BCL2 thus neutralizing its antiapoptotic activity. The sequence is that of Dynein light chain 1, cytoplasmic (DYNLL1) from Bos taurus (Bovine).